The sequence spans 80 residues: uncharacterized protein (80 aa).

This sequence belongs to the 2-oxoacid dehydrogenase family.

This is an uncharacterized protein from Mycobacterium tuberculosis (strain CDC 1551 / Oshkosh).